The primary structure comprises 832 residues: Protein P (832 aa).

The tract at residues 1-177 (MPLSYQHFRK…FCGSPYSWEQ (177 aa)) is terminal protein domain (TP). A spacer region spans residues 178–335 (ELQHGAESFH…YCLSHIVNLL (158 aa)). Over residues 186-206 (FHQQSSGILSRPSVGSSLQSK) the composition is skewed to polar residues. Disordered regions lie at residues 186 to 255 (FHQQ…GHNA) and 280 to 305 (TSENHSSSGHAVELHNLPPNSARSQS). Positions 210-220 (SRLGLQSQQGH) are enriched in low complexity. The polymerase/reverse transcriptase domain (RT) stretch occupies residues 336–679 (EDWGPCAEHG…YLNLYPVARQ (344 aa)). In terms of domain architecture, Reverse transcriptase spans 346 to 589 (EHHIRIPRTP…YSLNFMGYVI (244 aa)). 3 residues coordinate Mg(2+): D418, D540, and D541.

This sequence belongs to the hepadnaviridae P protein family.

It catalyses the reaction DNA(n) + a 2'-deoxyribonucleoside 5'-triphosphate = DNA(n+1) + diphosphate. The enzyme catalyses Endonucleolytic cleavage to 5'-phosphomonoester.. Activated by host HSP70 and HSP40 in vitro to be able to bind the epsilon loop of the pgRNA. Because deletion of the RNase H region renders the protein partly chaperone-independent, the chaperones may be needed indirectly to relieve occlusion of the RNA-binding site by this domain. Inhibited by several reverse-transcriptase inhibitors: Lamivudine, Adefovir and Entecavir. Functionally, multifunctional enzyme that converts the viral RNA genome into dsDNA in viral cytoplasmic capsids. This enzyme displays a DNA polymerase activity that can copy either DNA or RNA templates, and a ribonuclease H (RNase H) activity that cleaves the RNA strand of RNA-DNA heteroduplexes in a partially processive 3'- to 5'-endonucleasic mode. Neo-synthesized pregenomic RNA (pgRNA) are encapsidated together with the P protein, and reverse-transcribed inside the nucleocapsid. Initiation of reverse-transcription occurs first by binding the epsilon loop on the pgRNA genome, and is initiated by protein priming, thereby the 5'-end of (-)DNA is covalently linked to P protein. Partial (+)DNA is synthesized from the (-)DNA template and generates the relaxed circular DNA (RC-DNA) genome. After budding and infection, the RC-DNA migrates in the nucleus, and is converted into a plasmid-like covalently closed circular DNA (cccDNA). The activity of P protein does not seem to be necessary for cccDNA generation, and is presumably released from (+)DNA by host nuclear DNA repair machinery. The chain is Protein P from Hepatitis B virus genotype D subtype ayw (isolate Australia/AustKW/1991) (HBV-D).